Here is a 1113-residue protein sequence, read N- to C-terminus: Coiled-coil domain-containing protein 158 (1113 aa).

A compositionally biased stretch (polar residues) spans 1 to 14 (MESKAWESNNEDLL). The tract at residues 1–26 (MESKAWESNNEDLLSSSGVTSNGGSS) is disordered. Residues 15 to 26 (SSSGVTSNGGSS) are compositionally biased toward low complexity. Coiled-coil stretches lie at residues 72–183 (GKEH…LSHE) and 243–833 (VEDQ…QEQE). 2 disordered regions span residues 848–902 (LQGP…DPTR) and 955–1062 (CHRS…IETT). Composition is skewed to polar residues over residues 867–894 (ASVT…TKAN), 955–974 (CHRS…SSET), 994–1017 (FTFT…SSPK), 1024–1040 (LLTS…SQYR), and 1053–1062 (DSQSPPIETT). The stretch at 1061-1113 (TTGKTCRKLQNRLESLQTLVEDLQLKNQAMSSMIRNQEKRIQKVKDQEKMLLK) forms a coiled coil.

The polypeptide is Coiled-coil domain-containing protein 158 (CCDC158) (Homo sapiens (Human)).